Here is a 356-residue protein sequence, read N- to C-terminus: A-type ATP synthase subunit C (356 aa).

The protein belongs to the V-ATPase V0D/AC39 subunit family. Has multiple subunits with at least A(3), B(3), C, D, E, F, H, I and proteolipid K(x).

Its subcellular location is the cell membrane. Component of the A-type ATP synthase that produces ATP from ADP in the presence of a proton gradient across the membrane. This chain is A-type ATP synthase subunit C, found in Thermoplasma acidophilum (strain ATCC 25905 / DSM 1728 / JCM 9062 / NBRC 15155 / AMRC-C165).